A 107-amino-acid polypeptide reads, in one-letter code: Vasopressin-neurophysin 2 (107 aa).

Cysteine 1 and cysteine 6 are disulfide-bonded. Glycine 9 is subject to Glycine amide. Cystine bridges form between cysteine 22/cysteine 66, cysteine 25/cysteine 39, cysteine 33/cysteine 56, cysteine 40/cysteine 46, cysteine 73/cysteine 85, cysteine 79/cysteine 97, and cysteine 86/cysteine 91.

The protein belongs to the vasopressin/oxytocin family. Interacts with vasopressin receptors V1bR/AVPR1B (Ki=85 pM), V1aR/AVPR1A (Ki=0.6 nM) and V2R/AVPR2 (Ki=4.9 nM). Interacts with oxytocin receptor (OXTR) (Ki=110 nM).

Its subcellular location is the secreted. Its function is as follows. Neurophysin 2 specifically binds vasopressin. Functionally, vasopressin has a direct antidiuretic action on the kidney, it also causes vasoconstriction of the peripheral vessels. Acts by binding to vasopressin receptors (V1bR/AVPR1B, V1aR/AVPR1A, and V2R/AVPR2). This chain is Vasopressin-neurophysin 2 (AVP), found in Balaenoptera physalus (Fin whale).